A 617-amino-acid chain; its full sequence is RNA polymerase sigma factor RpoD (617 aa).

Positions 170–220 are disordered; the sequence is PDDGSLPAEEVEPVNLKDDSADSKEKDDEEEESDDSSDSDDEGDGGPDPEE. Residues 184–195 are compositionally biased toward basic and acidic residues; the sequence is NLKDDSADSKEK. The span at 196-218 shows a compositional bias: acidic residues; that stretch reads DDEEEESDDSSDSDDEGDGGPDP. Residues 383–453 are sigma-70 factor domain-2; sequence MVEANLRLVI…TRSIADQART (71 aa). The Interaction with polymerase core subunit RpoC motif lies at 407 to 410; sequence DLIQ. Residues 462 to 538 are sigma-70 factor domain-3; sequence ETINKLNRIS…DSTMQSPIEM (77 aa). The sigma-70 factor domain-4 stretch occupies residues 551–604; the sequence is VLAGLTAREAKVLRMRFGIDMNTDHTLEEVGKQFDVTRERIRQIEAKALRKLRH. The H-T-H motif DNA-binding region spans 577 to 596; it reads LEEVGKQFDVTRERIRQIEA.

This sequence belongs to the sigma-70 factor family. RpoD/SigA subfamily. As to quaternary structure, interacts transiently with the RNA polymerase catalytic core.

The protein resides in the cytoplasm. Its function is as follows. Sigma factors are initiation factors that promote the attachment of RNA polymerase to specific initiation sites and are then released. This sigma factor is the primary sigma factor during exponential growth. The sequence is that of RNA polymerase sigma factor RpoD from Pseudomonas aeruginosa (strain ATCC 15692 / DSM 22644 / CIP 104116 / JCM 14847 / LMG 12228 / 1C / PRS 101 / PAO1).